We begin with the raw amino-acid sequence, 513 residues long: Probable DNA ligase (513 aa).

Residue Glu213 participates in ATP binding. Lys215 (N6-AMP-lysine intermediate) is an active-site residue. Residues Arg220, Arg235, Glu264, Phe304, Arg376, and Lys382 each contribute to the ATP site.

It belongs to the ATP-dependent DNA ligase family. Mg(2+) is required as a cofactor.

The enzyme catalyses ATP + (deoxyribonucleotide)n-3'-hydroxyl + 5'-phospho-(deoxyribonucleotide)m = (deoxyribonucleotide)n+m + AMP + diphosphate.. In terms of biological role, DNA ligase that seals nicks in double-stranded DNA during DNA replication, DNA recombination and DNA repair. In Anaeromyxobacter dehalogenans (strain 2CP-C), this protein is Probable DNA ligase.